We begin with the raw amino-acid sequence, 265 residues long: MIKWPWKVQESAHQTALPWQEALSIPLLTGLTEQEQSKLVTLAERFLQQKRLVPLQGFELDSLRSCRIALLFCLPVLELGLEWLDGFHEVLIYPAPFVVDDEWEDDIGLVHNQRIVQSGQSWQQGPIVLNWLDIQDSFDASGFNLIIHEVAHKLDTRNGDRASGVPFISLREVAGWEHDLHAAMNNIQEEIELVGENAASIDAYAASDPAECFAVLSEYFFSAPELFAPRFPSLWQRFCQFYQQDPLQRLHHANDTDSFSATNVH.

Zn(2+) contacts are provided by histidine 111, histidine 148, histidine 152, and glutamate 211.

This sequence belongs to the MtfA family. Interacts with Mlc. Requires Zn(2+) as cofactor.

It localises to the cytoplasm. Its function is as follows. Involved in the modulation of the activity of the glucose-phosphotransferase system (glucose-PTS). Interacts with the transcriptional repressor Mlc, preventing its interaction with DNA and leading to the modulation of expression of genes regulated by Mlc, including ptsG, which encodes the PTS system glucose-specific EIICB component. Shows zinc-dependent metallopeptidase activity. In Escherichia coli (strain 55989 / EAEC), this protein is Mlc titration factor A.